The chain runs to 317 residues: METWQEVTVHVHRDAQEAVSHVLIETGSQGVAIADSADYIGQKDRFGELYPDVEQSDMIAITAYYPSSTNLADIIATINEQLAELASFGLQVGQVTVDSQELAEEDWADNWKKYYEPARITHDLTIVPSWTDYDASAGEKVIKLDPGMAFGTGTHPTTKMSLFALEQILRGGETVIDVGTGSGVLSIASSLLGAKTIYAYDLDDVAVRVAQDNIDLNQGTDNIHVAAGDLLKGVSQEADVIVANILADILVLLTDDAYRLVKKEGYLILSGIISEKLDMVLEAAFSAGFFLETHMVQGEWNALVFKKTDDISGVIGG.

The S-adenosyl-L-methionine site is built by threonine 158, glycine 179, aspartate 201, and asparagine 244.

It belongs to the methyltransferase superfamily. PrmA family.

The protein localises to the cytoplasm. It carries out the reaction L-lysyl-[protein] + 3 S-adenosyl-L-methionine = N(6),N(6),N(6)-trimethyl-L-lysyl-[protein] + 3 S-adenosyl-L-homocysteine + 3 H(+). Functionally, methylates ribosomal protein L11. This Streptococcus pyogenes serotype M1 protein is Ribosomal protein L11 methyltransferase.